The following is a 316-amino-acid chain: D-alanine--D-alanine ligase (316 aa).

The region spanning 109-304 (KRLWRGMDLP…FDEMVLQILA (196 aa)) is the ATP-grasp domain. 135 to 190 (AADLGLPLIVKPAREGSSLGMMKVESIEALQSAYREAVIFDTAVFAERWLPGAEYT) is an ATP binding site. Mg(2+) contacts are provided by Asp-258, Glu-271, and Asn-273.

This sequence belongs to the D-alanine--D-alanine ligase family. The cofactor is Mg(2+). It depends on Mn(2+) as a cofactor.

Its subcellular location is the cytoplasm. The catalysed reaction is 2 D-alanine + ATP = D-alanyl-D-alanine + ADP + phosphate + H(+). It participates in cell wall biogenesis; peptidoglycan biosynthesis. Cell wall formation. This Nitrosococcus oceani (strain ATCC 19707 / BCRC 17464 / JCM 30415 / NCIMB 11848 / C-107) protein is D-alanine--D-alanine ligase.